The primary structure comprises 545 residues: Zinc finger protein with KRAB and SCAN domains 4 (545 aa).

A disordered region spans residues 1-22 (MAREPRKNAALDAQSAEDQTGL). Residues Lys26 and Lys29 each participate in a glycyl lysine isopeptide (Lys-Gly) (interchain with G-Cter in SUMO2) cross-link. The interval 34–55 (ALTAEVRAPCSPARGPERSRQR) is disordered. An SCAN box domain is found at 53 to 135 (RQRFRGFRYP…VLLEYLERQL (83 aa)). Glycyl lysine isopeptide (Lys-Gly) (interchain with G-Cter in SUMO2) cross-links involve residues Lys178 and Lys222. The KRAB domain occupies 221–317 (LKMEDVALTL…QRKQKNAIGS (97 aa)). C2H2-type zinc fingers lie at residues 320-342 (HYCHECGKSFAQSSGLTKHRRIH), 348-370 (YECEDCGKTFIGSSALVIHQRVH), 376-398 (YECEECGKVFSHSSNLIKHQRTH), 404-426 (YECDDCGKTFSQSCSLLEHHKIH), and 432-454 (YQCNMCGKAFRRNSHLLRHQRIH). A compositionally biased stretch (basic and acidic residues) spans 455-467 (GDKNVQNPEHGES). A disordered region spans residues 455-480 (GDKNVQNPEHGESWESQGRTESQWEN). Residues 468-480 (WESQGRTESQWEN) show a composition bias toward polar residues. 2 C2H2-type zinc fingers span residues 487–509 (YKCNECERSFTRNRSLIEHQKIH) and 515–537 (YQCDTCGKGFTRTSYLVQHQRSH).

It belongs to the krueppel C2H2-type zinc-finger protein family. As to expression, expressed in adult heart, brain, placenta, lung and kidney, but not in adult liver and skeletal muscle. In 17-day old embryo, detected in liver, skeletal muscle, brain, heart and small intestine.

Its subcellular location is the nucleus. Its function is as follows. May be involved in the transcriptional activation of MDM2 and EP300 genes. This Homo sapiens (Human) protein is Zinc finger protein with KRAB and SCAN domains 4 (ZKSCAN4).